Consider the following 150-residue polypeptide: Large ribosomal subunit protein uL15 (150 aa).

Positions 1 to 57 are disordered; it reads MRLEDIRPQAGSTRRRRRLGRGVSAGQGASCGKGMRGQKARKGGSTRPGFEGGQTPL. Gly residues predominate over residues 23-35; that stretch reads VSAGQGASCGKGM.

This sequence belongs to the universal ribosomal protein uL15 family. Part of the 50S ribosomal subunit.

Functionally, binds to the 23S rRNA. The polypeptide is Large ribosomal subunit protein uL15 (Synechococcus sp. (strain JA-2-3B'a(2-13)) (Cyanobacteria bacterium Yellowstone B-Prime)).